A 617-amino-acid polypeptide reads, in one-letter code: Chaperone protein HscA homolog (617 aa).

It belongs to the heat shock protein 70 family.

In terms of biological role, chaperone involved in the maturation of iron-sulfur cluster-containing proteins. Has a low intrinsic ATPase activity which is markedly stimulated by HscB. In Aliivibrio salmonicida (strain LFI1238) (Vibrio salmonicida (strain LFI1238)), this protein is Chaperone protein HscA homolog.